A 1071-amino-acid chain; its full sequence is DNA-directed RNA polymerase subunit beta (1071 aa).

The protein belongs to the RNA polymerase beta chain family. In plastids the minimal PEP RNA polymerase catalytic core is composed of four subunits: alpha, beta, beta', and beta''. When a (nuclear-encoded) sigma factor is associated with the core the holoenzyme is formed, which can initiate transcription.

It localises to the plastid. The protein resides in the chloroplast. It carries out the reaction RNA(n) + a ribonucleoside 5'-triphosphate = RNA(n+1) + diphosphate. In terms of biological role, DNA-dependent RNA polymerase catalyzes the transcription of DNA into RNA using the four ribonucleoside triphosphates as substrates. In Nymphaea alba (White water-lily), this protein is DNA-directed RNA polymerase subunit beta.